The primary structure comprises 314 residues: Formimidoylglutamase (314 aa).

H127, D151, H153, D155, D239, and D241 together coordinate Mn(2+).

It belongs to the arginase family. It depends on Mn(2+) as a cofactor.

It catalyses the reaction N-formimidoyl-L-glutamate + H2O = formamide + L-glutamate. It participates in amino-acid degradation; L-histidine degradation into L-glutamate; L-glutamate from N-formimidoyl-L-glutamate (hydrolase route): step 1/1. Functionally, catalyzes the conversion of N-formimidoyl-L-glutamate to L-glutamate and formamide. The polypeptide is Formimidoylglutamase (Corynebacterium efficiens (strain DSM 44549 / YS-314 / AJ 12310 / JCM 11189 / NBRC 100395)).